An 87-amino-acid polypeptide reads, in one-letter code: Small ribosomal subunit protein uS15c (87 aa).

This sequence belongs to the universal ribosomal protein uS15 family. Part of the 30S ribosomal subunit.

Its subcellular location is the plastid. The protein resides in the chloroplast. This Solanum bulbocastanum (Wild potato) protein is Small ribosomal subunit protein uS15c (rps15).